We begin with the raw amino-acid sequence, 191 residues long: Calcium-activated potassium channel subunit beta-1 (191 aa).

Residues 1-18 (MVKKLVMAQKRGETRALC) are Cytoplasmic-facing. Residues 19–39 (LGVTMVVCAVITYYILVTTVL) traverse the membrane as a helical segment. The Extracellular segment spans residues 40–157 (PLYQKSVWTQ…FQRLYGPQAL (118 aa)). 2 N-linked (GlcNAc...) asparagine glycosylation sites follow: N80 and N142. Residues 158-178 (LFSLFWPTFLLTGGLLIIAMV) form a helical membrane-spanning segment. Residues 179–191 (KSNQYLSILAAQK) lie on the Cytoplasmic side of the membrane.

Belongs to the KCNMB (TC 8.A.14.1) family. KCNMB1 subfamily. As to quaternary structure, interacts with KCNMA1 tetramer. There are probably 4 molecules of KCMNB1 per KCNMA1 tetramer. N-glycosylated. As to expression, abundantly expressed in smooth muscle. Low levels of expression in most other tissues. Within the brain, relatively high levels found in hippocampus and corpus callosum.

The protein localises to the membrane. In terms of biological role, regulatory subunit of the calcium activated potassium KCNMA1 (maxiK) channel. Modulates the calcium sensitivity and gating kinetics of KCNMA1, thereby contributing to KCNMA1 channel diversity. Increases the apparent Ca(2+)/voltage sensitivity of the KCNMA1 channel. It also modifies KCNMA1 channel kinetics and alters its pharmacological properties. It slows down the activation and the deactivation kinetics of the channel. Acts as a negative regulator of smooth muscle contraction by enhancing the calcium sensitivity to KCNMA1. Its presence is also a requirement for internal binding of the KCNMA1 channel opener dehydrosoyasaponin I (DHS-1) triterpene glycoside and for external binding of the agonist hormone 17-beta-estradiol (E2). Increases the binding activity of charybdotoxin (CTX) toxin to KCNMA1 peptide blocker by increasing the CTX association rate and decreasing the dissociation rate. The chain is Calcium-activated potassium channel subunit beta-1 (KCNMB1) from Homo sapiens (Human).